We begin with the raw amino-acid sequence, 245 residues long: Outer membrane protein assembly factor BamD (245 aa).

The first 19 residues, 1–19 (MTRMKYLVAAATLSLFLAG), serve as a signal peptide directing secretion. Cysteine 20 carries the N-palmitoyl cysteine lipid modification. Cysteine 20 carries the S-diacylglycerol cysteine lipid modification.

The protein belongs to the BamD family. In terms of assembly, part of the Bam complex, which is composed of the outer membrane protein BamA, and four lipoproteins BamB, BamC, BamD and BamE.

It is found in the cell outer membrane. Functionally, part of the outer membrane protein assembly complex, which is involved in assembly and insertion of beta-barrel proteins into the outer membrane. Constitutes, with BamA, the core component of the assembly machinery. The sequence is that of Outer membrane protein assembly factor BamD from Escherichia coli O157:H7.